The following is a 144-amino-acid chain: Large ribosomal subunit protein uL13 (144 aa).

The protein belongs to the universal ribosomal protein uL13 family. In terms of assembly, part of the 50S ribosomal subunit.

This protein is one of the early assembly proteins of the 50S ribosomal subunit, although it is not seen to bind rRNA by itself. It is important during the early stages of 50S assembly. The sequence is that of Large ribosomal subunit protein uL13 from Mycoplasmopsis synoviae (strain 53) (Mycoplasma synoviae).